The primary structure comprises 483 residues: Altronate oxidoreductase (483 aa).

Position 18–29 (18–29 (IIQFGEGNFLRA)) interacts with NAD(+).

It belongs to the mannitol dehydrogenase family. UxaB subfamily.

It carries out the reaction D-altronate + NAD(+) = keto-D-tagaturonate + NADH + H(+). Its pathway is carbohydrate metabolism; pentose and glucuronate interconversion. This chain is Altronate oxidoreductase, found in Escherichia coli O17:K52:H18 (strain UMN026 / ExPEC).